The primary structure comprises 272 residues: 3-methyl-2-oxobutanoate hydroxymethyltransferase (272 aa).

Residues D54 and D93 each contribute to the Mg(2+) site. 3-methyl-2-oxobutanoate contacts are provided by residues 54 to 55, D93, and K123; that span reads DS. Position 125 (E125) interacts with Mg(2+). The active-site Proton acceptor is the E190.

The protein belongs to the PanB family. Homodecamer; pentamer of dimers. Mg(2+) is required as a cofactor.

Its subcellular location is the cytoplasm. It catalyses the reaction 3-methyl-2-oxobutanoate + (6R)-5,10-methylene-5,6,7,8-tetrahydrofolate + H2O = 2-dehydropantoate + (6S)-5,6,7,8-tetrahydrofolate. It functions in the pathway cofactor biosynthesis; (R)-pantothenate biosynthesis; (R)-pantoate from 3-methyl-2-oxobutanoate: step 1/2. Catalyzes the reversible reaction in which hydroxymethyl group from 5,10-methylenetetrahydrofolate is transferred onto alpha-ketoisovalerate to form ketopantoate. This chain is 3-methyl-2-oxobutanoate hydroxymethyltransferase, found in Tropheryma whipplei (strain Twist) (Whipple's bacillus).